The sequence spans 110 residues: Iron-sulfur cluster insertion protein ErpA (110 aa).

Residues C38, C102, and C104 each contribute to the iron-sulfur cluster site.

The protein belongs to the HesB/IscA family. As to quaternary structure, homodimer. Requires iron-sulfur cluster as cofactor.

Its function is as follows. Required for insertion of 4Fe-4S clusters for at least IspG. This chain is Iron-sulfur cluster insertion protein ErpA, found in Marinobacter nauticus (strain ATCC 700491 / DSM 11845 / VT8) (Marinobacter aquaeolei).